Consider the following 480-residue polypeptide: EGF-like repeat and discoidin I-like domain-containing protein 3 (480 aa).

A signal peptide spans 1–23 (MKHLVAAWLLVGLSLGVPQFGKG). Residues 24-60 (DICNPNPCENGGICLSGLADDSFSCECPEGFAGPNCS) enclose the EGF-like 1 domain. 3 disulfide bridges follow: cysteine 26/cysteine 37, cysteine 31/cysteine 48, and cysteine 50/cysteine 59. Residue threonine 73 is glycosylated (O-linked (GalNAc...) threonine). EGF-like domains lie at 74-117 (SAGP…IHCQ) and 119-155 (NINECEAEPCRNGGICTDLVANYSCECPGEFMGRNCQ). 3 disulfide bridges follow: cysteine 78-cysteine 89, cysteine 83-cysteine 105, and cysteine 107-cysteine 116. Threonine 88 carries O-linked (Fuc...) threonine glycosylation. Positions 96–98 (RGD) match the Cell attachment site motif. Positions 119, 120, and 122 each coordinate Ca(2+). 6 cysteine pairs are disulfide-bonded: cysteine 123/cysteine 134, cysteine 128/cysteine 143, cysteine 145/cysteine 154, cysteine 158/cysteine 314, cysteine 301/cysteine 305, and cysteine 319/cysteine 476. 2 residues coordinate Ca(2+): aspartate 136 and leucine 137. N-linked (GlcNAc...) asparagine glycosylation is present at asparagine 140. F5/8 type C domains are found at residues 158 to 314 (CSGP…LLGC) and 319 to 476 (CSEP…LLGC).

As to expression, expressed in angioblasts and early endothelial cells. By embryonic day 13.5, also expressed in a restricted group of non-endothelial cells including chondrocytes and retinal neurons.

The protein localises to the secreted. In terms of biological role, promotes adhesion of endothelial cells through interaction with the alpha-v/beta-3 integrin receptor. Inhibits formation of vascular-like structures. May be involved in regulation of vascular morphogenesis of remodeling in embryonic development. This Mus musculus (Mouse) protein is EGF-like repeat and discoidin I-like domain-containing protein 3 (Edil3).